A 303-amino-acid polypeptide reads, in one-letter code: UDP-N-acetylenolpyruvoylglucosamine reductase (303 aa).

Residues K27 to I217 enclose the FAD-binding PCMH-type domain. Residue R175 is part of the active site. S224 (proton donor) is an active-site residue. E294 is a catalytic residue.

The protein belongs to the MurB family. FAD serves as cofactor.

The protein resides in the cytoplasm. The enzyme catalyses UDP-N-acetyl-alpha-D-muramate + NADP(+) = UDP-N-acetyl-3-O-(1-carboxyvinyl)-alpha-D-glucosamine + NADPH + H(+). The protein operates within cell wall biogenesis; peptidoglycan biosynthesis. Cell wall formation. This is UDP-N-acetylenolpyruvoylglucosamine reductase from Orientia tsutsugamushi (strain Ikeda) (Rickettsia tsutsugamushi).